Here is a 354-residue protein sequence, read N- to C-terminus: Probable dual-specificity RNA methyltransferase RlmN (354 aa).

The active-site Proton acceptor is Glu-94. The region spanning 103–332 (GRRRNTACLS…QEAGLEAAIR (230 aa)) is the Radical SAM core domain. A disulfide bridge links Cys-110 with Cys-343. 3 residues coordinate [4Fe-4S] cluster: Cys-117, Cys-121, and Cys-124. S-adenosyl-L-methionine is bound by residues 169 to 170 (GE), Ser-201, 224 to 226 (SLH), and Asn-300. The S-methylcysteine intermediate role is filled by Cys-343.

The protein belongs to the radical SAM superfamily. RlmN family. It depends on [4Fe-4S] cluster as a cofactor.

The protein resides in the cytoplasm. The enzyme catalyses adenosine(2503) in 23S rRNA + 2 reduced [2Fe-2S]-[ferredoxin] + 2 S-adenosyl-L-methionine = 2-methyladenosine(2503) in 23S rRNA + 5'-deoxyadenosine + L-methionine + 2 oxidized [2Fe-2S]-[ferredoxin] + S-adenosyl-L-homocysteine. It carries out the reaction adenosine(37) in tRNA + 2 reduced [2Fe-2S]-[ferredoxin] + 2 S-adenosyl-L-methionine = 2-methyladenosine(37) in tRNA + 5'-deoxyadenosine + L-methionine + 2 oxidized [2Fe-2S]-[ferredoxin] + S-adenosyl-L-homocysteine. Its function is as follows. Specifically methylates position 2 of adenine 2503 in 23S rRNA and position 2 of adenine 37 in tRNAs. The protein is Probable dual-specificity RNA methyltransferase RlmN of Moorella thermoacetica (strain ATCC 39073 / JCM 9320).